The sequence spans 33 residues: Protamine-M6/M7 (33 aa).

Residues 1–33 (PRRRRETSRPIRRRRRARRAPIRRRRRVVRRRR) are disordered.

In terms of tissue distribution, testis.

It localises to the nucleus. Its subcellular location is the chromosome. In terms of biological role, protamines substitute for histones in the chromatin of sperm during the haploid phase of spermatogenesis. They compact sperm DNA into a highly condensed, stable and inactive complex. The sequence is that of Protamine-M6/M7 from Mugil cephalus (Flathead mullet).